The primary structure comprises 153 residues: 6,7-dimethyl-8-ribityllumazine synthase (153 aa).

5-amino-6-(D-ribitylamino)uracil is bound by residues Phe-22, 56–58 (AFE), and 80–82 (TVI). A (2S)-2-hydroxy-3-oxobutyl phosphate-binding site is contributed by 85–86 (AT). Catalysis depends on His-88, which acts as the Proton donor. Residue Phe-113 coordinates 5-amino-6-(D-ribitylamino)uracil. Arg-127 is a binding site for (2S)-2-hydroxy-3-oxobutyl phosphate.

This sequence belongs to the DMRL synthase family.

The catalysed reaction is (2S)-2-hydroxy-3-oxobutyl phosphate + 5-amino-6-(D-ribitylamino)uracil = 6,7-dimethyl-8-(1-D-ribityl)lumazine + phosphate + 2 H2O + H(+). Its pathway is cofactor biosynthesis; riboflavin biosynthesis; riboflavin from 2-hydroxy-3-oxobutyl phosphate and 5-amino-6-(D-ribitylamino)uracil: step 1/2. Functionally, catalyzes the formation of 6,7-dimethyl-8-ribityllumazine by condensation of 5-amino-6-(D-ribitylamino)uracil with 3,4-dihydroxy-2-butanone 4-phosphate. This is the penultimate step in the biosynthesis of riboflavin. The sequence is that of 6,7-dimethyl-8-ribityllumazine synthase from Clostridium perfringens (strain 13 / Type A).